An 865-amino-acid polypeptide reads, in one-letter code: Envelope glycoprotein gp160 (865 aa).

An N-terminal signal peptide occupies residues methionine 1–serine 20. The Extracellular segment spans residues lysine 21–glycine 705. N-linked (GlcNAc...) asparagine; by host glycosylation occurs at asparagine 35. Residues cysteine 42 and cysteine 55 are joined by a disulfide bond. N-linked (GlcNAc...) asparagine; by host glycans are attached at residues asparagine 68, asparagine 117, asparagine 150, asparagine 165, asparagine 195, asparagine 198, asparagine 210, asparagine 252, asparagine 255, asparagine 266, asparagine 276, asparagine 282, asparagine 294, asparagine 306, asparagine 316, asparagine 373, asparagine 414, asparagine 451, asparagine 488, and asparagine 491. Disulfide bonds link cysteine 101/cysteine 218, cysteine 108/cysteine 209, cysteine 113/cysteine 166, cysteine 231/cysteine 261, and cysteine 241/cysteine 253. Residues cysteine 113–asparagine 165 form a V1 region. The segment at cysteine 166–cysteine 209 is V2. The segment at cysteine 311–tryptophan 343 is V3. Cysteine 311 and cysteine 344 form a disulfide bridge. A disulfide bond links cysteine 396 and cysteine 471. The V4 stretch occupies residues cysteine 403–tyrosine 444. A V5 region spans residues lysine 487 to leucine 494. Residues valine 537–alanine 557 are fusion peptide. The interval leucine 600 to arginine 616 is immunosuppression. N-linked (GlcNAc...) asparagine; by host glycosylation is found at asparagine 645 and asparagine 661. Residues glutamate 650–lysine 675 are a coiled coil. The MPER; binding to GalCer stretch occupies residues lysine 682–lysine 703. A helical transmembrane segment spans residues phenylalanine 706 to valine 726. Topologically, residues arginine 727–asparagine 865 are cytoplasmic. A YXXL motif; contains endocytosis signal motif is present at residues tyrosine 732 to leucine 735. A disordered region spans residues valine 744–arginine 763.

In terms of assembly, the mature envelope protein (Env) consists of a homotrimer of non-covalently associated gp120-gp41 heterodimers. The resulting complex protrudes from the virus surface as a spike. Interacts with host CD4 and CCR5. Gp120 also interacts with the C-type lectins CD209/DC-SIGN and CLEC4M/DC-SIGNR (collectively referred to as DC-SIGN(R)). As to quaternary structure, the mature envelope protein (Env) consists of a homotrimer of non-covalently associated gp120-gp41 heterodimers. The resulting complex protrudes from the virus surface as a spike. Specific enzymatic cleavages in vivo yield mature proteins. Envelope glycoproteins are synthesized as an inactive precursor that is heavily N-glycosylated and processed likely by host cell furin in the Golgi to yield the mature SU and TM proteins. The cleavage site between SU and TM requires the minimal sequence [KR]-X-[KR]-R.

The protein localises to the virion membrane. It is found in the host cell membrane. The protein resides in the host endosome membrane. Functionally, the surface protein gp120 (SU) attaches the virus to the host lymphoid cell by binding to the primary receptor CD4. This interaction induces a structural rearrangement creating a high affinity binding site for a chemokine coreceptor like CCR5. This peculiar 2 stage receptor-interaction strategy allows gp120 to maintain the highly conserved coreceptor-binding site in a cryptic conformation, protected from neutralizing antibodies. These changes are transmitted to the transmembrane protein gp41 and are thought to activate its fusogenic potential by unmasking its fusion peptide. Its function is as follows. Surface protein gp120 (SU) may target the virus to gut-associated lymphoid tissue (GALT) by binding host ITGA4/ITGB7 (alpha-4/beta-7 integrins), a complex that mediates T-cell migration to the GALT. Interaction between gp120 and ITGA4/ITGB7 would allow the virus to enter GALT early in the infection, infecting and killing most of GALT's resting CD4+ T-cells. This T-cell depletion is believed to be the major insult to the host immune system leading to AIDS. The surface protein gp120 is a ligand for CD209/DC-SIGN and CLEC4M/DC-SIGNR, which are respectively found on dendritic cells (DCs), and on endothelial cells of liver sinusoids and lymph node sinuses. These interactions allow capture of viral particles at mucosal surfaces by these cells and subsequent transmission to permissive cells. DCs are professional antigen presenting cells, critical for host immunity by inducing specific immune responses against a broad variety of pathogens. They act as sentinels in various tissues where they take up antigen, process it, and present it to T-cells following migration to lymphoid organs. SIV subverts the migration properties of dendritic cells to gain access to CD4+ T-cells in lymph nodes. Virus transmission to permissive T-cells occurs either in trans (without DCs infection, through viral capture and transmission), or in cis (following DCs productive infection, through the usual CD4-gp120 interaction), thereby inducing a robust infection. In trans infection, bound virions remain infectious over days and it is proposed that they are not degraded, but protected in non-lysosomal acidic organelles within the DCs close to the cell membrane thus contributing to the viral infectious potential during DCs' migration from the periphery to the lymphoid tissues. On arrival at lymphoid tissues, intact virions recycle back to DCs' cell surface allowing virus transmission to CD4+ T-cells. Virion capture also seems to lead to MHC-II-restricted viral antigen presentation, and probably to the activation of SIV-specific CD4+ cells. In terms of biological role, the transmembrane protein gp41 (TM) acts as a class I viral fusion protein. Under the current model, the protein has at least 3 conformational states: pre-fusion native state, pre-hairpin intermediate state, and post-fusion hairpin state. During fusion of viral and target intracellular membranes, the coiled coil regions (heptad repeats) assume a trimer-of-hairpins structure, positioning the fusion peptide in close proximity to the C-terminal region of the ectodomain. The formation of this structure appears to drive apposition and subsequent fusion of viral and target cell membranes. Complete fusion occurs in host cell endosomes. The virus undergoes clathrin-dependent internalization long before endosomal fusion, thus minimizing the surface exposure of conserved viral epitopes during fusion and reducing the efficacy of inhibitors targeting these epitopes. Membranes fusion leads to delivery of the nucleocapsid into the cytoplasm. Functionally, the envelope glycoprotein gp160 precursor down-modulates cell surface CD4 antigen by interacting with it in the endoplasmic reticulum and blocking its transport to the cell surface. Its function is as follows. The gp120-gp41 heterodimer allows rapid transcytosis of the virus through CD4 negative cells such as simple epithelial monolayers of the intestinal, rectal and endocervical epithelial barriers. Both gp120 and gp41 specifically recognize glycosphingolipids galactosyl-ceramide (GalCer) or 3' sulfo-galactosyl-ceramide (GalS) present in the lipid rafts structures of epithelial cells. Binding to these alternative receptors allows the rapid transcytosis of the virus through the epithelial cells. This transcytotic vesicle-mediated transport of virions from the apical side to the basolateral side of the epithelial cells does not involve infection of the cells themselves. This Simian immunodeficiency virus agm.vervet (isolate AGM TYO-1) (SIV-agm.ver) protein is Envelope glycoprotein gp160 (env).